The sequence spans 530 residues: Putative sulfate transporter YvdB (530 aa).

Helical transmembrane passes span 19 to 39 (LIAG…FAIA), 41 to 61 (GVEP…ISLF), 68 to 88 (IGGP…QYGL), 91 to 111 (LLIA…FKLG), 121 to 141 (VIVG…IANF), 164 to 184 (LGTF…ILLV), 192 to 212 (VPGA…FFPD), 241 to 261 (MVML…ESIL), 313 to 333 (AVSP…LLVF), and 384 to 404 (VLFD…VFFI). The STAS domain maps to 420–530 (PVLAKREDPS…FFDHHDEITG (111 aa)).

Belongs to the SLC26A/SulP transporter (TC 2.A.53) family.

The protein resides in the cell membrane. This is Putative sulfate transporter YvdB (yvdB) from Bacillus subtilis (strain 168).